The sequence spans 300 residues: Acetylglutamate kinase (300 aa).

Residues Gly-73–Gly-74, Arg-95, and Asn-197 contribute to the substrate site.

It belongs to the acetylglutamate kinase family. ArgB subfamily.

The protein localises to the cytoplasm. The catalysed reaction is N-acetyl-L-glutamate + ATP = N-acetyl-L-glutamyl 5-phosphate + ADP. The protein operates within amino-acid biosynthesis; L-arginine biosynthesis; N(2)-acetyl-L-ornithine from L-glutamate: step 2/4. Functionally, catalyzes the ATP-dependent phosphorylation of N-acetyl-L-glutamate. The chain is Acetylglutamate kinase from Bordetella avium (strain 197N).